Reading from the N-terminus, the 832-residue chain is Elongation factor 2 (832 aa).

The tr-type G domain occupies 17–336 (HNIRNMSVIA…MIVTHLPSPA (320 aa)). 26 to 33 (AHVDHGKS) is a GTP binding site. Phosphothreonine occurs at positions 57 and 59. Residues 152 to 155 (NKVD) and 207 to 209 (SGL) each bind GTP. A disordered region spans residues 580–608 (AEPLPDGLTDDIEEGKVSPRDDPKERSNL). Basic and acidic residues predominate over residues 593-608 (EGKVSPRDDPKERSNL). His689 is subject to Diphthamide.

It belongs to the TRAFAC class translation factor GTPase superfamily. Classic translation factor GTPase family. EF-G/EF-2 subfamily.

It localises to the cytoplasm. It carries out the reaction GTP + H2O = GDP + phosphate + H(+). Catalyzes the GTP-dependent ribosomal translocation step during translation elongation. During this step, the ribosome changes from the pre-translocational (PRE) to the post-translocational (POST) state as the newly formed A-site-bound peptidyl-tRNA and P-site-bound deacylated tRNA move to the P and E sites, respectively. Catalyzes the coordinated movement of the two tRNA molecules, the mRNA and conformational changes in the ribosome. In Cryptosporidium parvum, this protein is Elongation factor 2.